We begin with the raw amino-acid sequence, 131 residues long: MAKRNVTAKKKVVKKNIARGVVYISATFNNTNITITDEMGNVICWSTAGGLGFKGSKKSTPYAAQQAVESALSKAKEHGVKEVGIKVQGPGSGRETAIKSVGTTEGVKVLWIKDITPLPHNGCRPPKRRRV.

Belongs to the universal ribosomal protein uS11 family. Part of the 30S ribosomal subunit. Interacts with proteins S7 and S18. Binds to IF-3.

Its function is as follows. Located on the platform of the 30S subunit, it bridges several disparate RNA helices of the 16S rRNA. Forms part of the Shine-Dalgarno cleft in the 70S ribosome. The protein is Small ribosomal subunit protein uS11 of Helicobacter pylori (strain Shi470).